Reading from the N-terminus, the 463-residue chain is L-seryl-tRNA(Sec) selenium transferase (463 aa).

K295 carries the N6-(pyridoxal phosphate)lysine modification.

This sequence belongs to the SelA family. As to quaternary structure, homodecamer; pentamer of dimers. Binds only one seryl-tRNA(Sec) per dimer. Requires pyridoxal 5'-phosphate as cofactor.

It localises to the cytoplasm. The catalysed reaction is L-seryl-tRNA(Sec) + selenophosphate + H(+) = L-selenocysteinyl-tRNA(Sec) + phosphate. It functions in the pathway aminoacyl-tRNA biosynthesis; selenocysteinyl-tRNA(Sec) biosynthesis; selenocysteinyl-tRNA(Sec) from L-seryl-tRNA(Sec) (bacterial route): step 1/1. In terms of biological role, converts seryl-tRNA(Sec) to selenocysteinyl-tRNA(Sec) required for selenoprotein biosynthesis. This chain is L-seryl-tRNA(Sec) selenium transferase, found in Escherichia coli O45:K1 (strain S88 / ExPEC).